A 353-amino-acid polypeptide reads, in one-letter code: Photosystem II protein D1 (353 aa).

Thr2 carries the post-translational modification N-acetylthreonine. Residue Thr2 is modified to Phosphothreonine. Transmembrane regions (helical) follow at residues 29–46 (YIGW…TATS), 118–133 (HFFL…EWEL), and 142–156 (WIAV…AATA). His118 contacts chlorophyll a. Tyr126 lines the pheophytin a pocket. 2 residues coordinate [CaMn4O5] cluster: Asp170 and Glu189. The helical transmembrane segment at 197 to 218 (FHMLGVAGVFGGSLFSAMHGSL) threads the bilayer. His198 lines the chlorophyll a pocket. A quinone is bound by residues His215 and 264 to 265 (SF). A Fe cation-binding site is contributed by His215. His272 is a Fe cation binding site. Residues 274-288 (FLAAWPVVGIWFTAL) traverse the membrane as a helical segment. The [CaMn4O5] cluster site is built by His332, Glu333, Asp342, and Ala344. A propeptide spanning residues 345 to 353 (VVEAPAVNG) is cleaved from the precursor.

Belongs to the reaction center PufL/M/PsbA/D family. As to quaternary structure, PSII is composed of 1 copy each of membrane proteins PsbA, PsbB, PsbC, PsbD, PsbE, PsbF, PsbH, PsbI, PsbJ, PsbK, PsbL, PsbM, PsbT, PsbX, PsbY, PsbZ, Psb30/Ycf12, at least 3 peripheral proteins of the oxygen-evolving complex and a large number of cofactors. It forms dimeric complexes. It depends on The D1/D2 heterodimer binds P680, chlorophylls that are the primary electron donor of PSII, and subsequent electron acceptors. It shares a non-heme iron and each subunit binds pheophytin, quinone, additional chlorophylls, carotenoids and lipids. D1 provides most of the ligands for the Mn4-Ca-O5 cluster of the oxygen-evolving complex (OEC). There is also a Cl(-1) ion associated with D1 and D2, which is required for oxygen evolution. The PSII complex binds additional chlorophylls, carotenoids and specific lipids. as a cofactor. Post-translationally, tyr-161 forms a radical intermediate that is referred to as redox-active TyrZ, YZ or Y-Z. C-terminally processed by CTPA; processing is essential to allow assembly of the oxygen-evolving complex and thus photosynthetic growth.

It localises to the plastid. The protein localises to the chloroplast thylakoid membrane. The catalysed reaction is 2 a plastoquinone + 4 hnu + 2 H2O = 2 a plastoquinol + O2. Functionally, photosystem II (PSII) is a light-driven water:plastoquinone oxidoreductase that uses light energy to abstract electrons from H(2)O, generating O(2) and a proton gradient subsequently used for ATP formation. It consists of a core antenna complex that captures photons, and an electron transfer chain that converts photonic excitation into a charge separation. The D1/D2 (PsbA/PsbD) reaction center heterodimer binds P680, the primary electron donor of PSII as well as several subsequent electron acceptors. The protein is Photosystem II protein D1 of Chlorella vulgaris (Green alga).